The primary structure comprises 109 residues: MEQFECINVEEAHQKLHQQTAVLVDIRDPQSYAMGHTPGAFHLTNDTLGAFMRDHDFDTAVMVMCYHGNSSKGAAQYLLQQGFDKVYSVDGGFDAWHRHFPAEVAHGTF.

Residues 17–105 (HQQTAVLVDI…WHRHFPAEVA (89 aa)) enclose the Rhodanese domain. Cys65 functions as the Cysteine persulfide intermediate in the catalytic mechanism.

Belongs to the GlpE family.

The protein resides in the cytoplasm. It catalyses the reaction thiosulfate + hydrogen cyanide = thiocyanate + sulfite + 2 H(+). The catalysed reaction is thiosulfate + [thioredoxin]-dithiol = [thioredoxin]-disulfide + hydrogen sulfide + sulfite + 2 H(+). Transferase that catalyzes the transfer of sulfur from thiosulfate to thiophilic acceptors such as cyanide or dithiols. May function in a CysM-independent thiosulfate assimilation pathway by catalyzing the conversion of thiosulfate to sulfite, which can then be used for L-cysteine biosynthesis. The polypeptide is Thiosulfate sulfurtransferase GlpE (Klebsiella pneumoniae (strain 342)).